The chain runs to 1132 residues: Phytochrome B (1132 aa).

Residues Met1–His11 show a composition bias toward basic residues. Residues Met1–Asn27 are disordered. Residues Gln12–Ser26 are compositionally biased toward low complexity. In terms of domain architecture, GAF spans Asp231–Leu409. Residue Cys336 coordinates phytochromobilin. PAS domains are found at residues Val623–Glu694 and Asp757–Leu828. Positions Tyr905–Arg1125 constitute a Histidine kinase domain.

This sequence belongs to the phytochrome family. As to quaternary structure, homodimer. In terms of processing, contains one covalently linked phytochromobilin chromophore.

Regulatory photoreceptor which exists in two forms that are reversibly interconvertible by light: the Pr form that absorbs maximally in the red region of the spectrum and the Pfr form that absorbs maximally in the far-red region. Photoconversion of Pr to Pfr induces an array of morphogenic responses, whereas reconversion of Pfr to Pr cancels the induction of those responses. Pfr controls the expression of a number of nuclear genes including those encoding the small subunit of ribulose-bisphosphate carboxylase, chlorophyll A/B binding protein, protochlorophyllide reductase, rRNA, etc. It also controls the expression of its own gene(s) in a negative feedback fashion. This Nicotiana tabacum (Common tobacco) protein is Phytochrome B (PHYB).